Reading from the N-terminus, the 219-residue chain is Glutathione S-transferase-like protein LUC7 (219 aa).

The region spanning 3–84 (PFGRLYSFMP…YLAQSGPYSE (82 aa)) is the GST N-terminal domain. Positions 90-219 (DAATSAKIRQ…NLIDVKRVHE (130 aa)) constitute a GST C-terminal domain.

It belongs to the GST superfamily.

In terms of biological role, glutathione S-transferase-like protein; part of the gene cluster that mediates the biosynthesis of the mycotoxin lucilactaene and the lucilactaene-related compound NG-391 that act as cell cycle inhibitors with potent growth inhibitory activity against malarial parasites, moderate growth inhibitory activity against cancer cells, and no activity against bacteria and fungi. Within the cluster, LUC7 and LUC8 encode proteins which are not commonly involved in the biosynthesis of secondary metabolites and are not essential for lucilactaene biosynthesis. This is Glutathione S-transferase-like protein LUC7 from Fusarium sp.